The chain runs to 790 residues: Lysine biosynthesis regulatory protein LYS14 (790 aa).

Disordered stretches follow at residues 1 to 50 (MFES…SCFE) and 72 to 157 (FNHK…YSRN). Residues 35–47 (SGSSFTNSGTSTS) are compositionally biased toward low complexity. Polar residues-rich tracts occupy residues 75 to 113 (KQMT…SEQD) and 120 to 142 (TISQ…TSTV). Positions 159–186 (CSECKRRRMKCDETKPTCWQCARLNRQC) form a DNA-binding region, zn(2)-C6 fungal-type. Residues 195-258 (KKRRTSNAQR…PKPITDNGKN (64 aa)) are disordered. Over residues 222 to 239 (ARKRQHSSCKAEKKKKVR) the composition is skewed to basic residues.

It localises to the nucleus. Functionally, activates the transcription of lysine biosynthesis genes. This activation is dependent on the inducer alpha-aminoadipate semialdehyde and repressed by lysine. The protein is Lysine biosynthesis regulatory protein LYS14 (LYS14) of Saccharomyces cerevisiae (strain ATCC 204508 / S288c) (Baker's yeast).